The following is a 197-amino-acid chain: uncharacterized protein (197 aa).

This is an uncharacterized protein from Methanothermobacter thermautotrophicus (Methanobacterium thermoformicicum).